The sequence spans 404 residues: MHAWPDPSVPAVAGTPVPLKLFDTADQRVKEVDTTPDANGEVGMYVCGITPYDSTHLGHAATYLTFDLAQRQLLANGHKVHYVQNITDVDDPLFERAERDGVDWRELGTSQINLFRSDMEILSVIPPRDYIGAMESVDEVIAMVQQLLDAGAAYELDQGDIYASIDATEQFGYESNLDRATMEEYFAERGGDPDREGKRDPLDALVWRGHREGEPAWDSPFGPGRPGWHVECSAIATNRLGSHFAIQGGGSDLAFPHHEFSAAHAEAALKVERMAGHYVHAGMIALDGVKMSKSLGNLVFVHKLSEAGHDPSAIRLAVFAGHYREDRDFSDAILAEAEERLTRWREQLAGEVSEAEATEVVDKLRAILADDLNTPEALSLLDGAAGDCNQIIATALDGLLGVRI.

A Zn(2+)-binding site is contributed by C47. L-cysteinyl-5'-AMP-binding positions include 47-50, T62, and 85-87; these read CGIT and NIT. The 'HIGH' region signature appears at 49 to 59; that stretch reads ITPYDSTHLGH. The 'ERGGDP' region motif lies at 188–193; it reads ERGGDP. Residue W228 participates in L-cysteinyl-5'-AMP binding. C232 contacts Zn(2+). 250–252 lines the L-cysteinyl-5'-AMP pocket; it reads GSD. A Zn(2+)-binding site is contributed by H257. An L-cysteinyl-5'-AMP-binding site is contributed by I284. The short motif at 290-294 is the 'KMSKS' region element; that stretch reads KMSKS.

Belongs to the class-I aminoacyl-tRNA synthetase family. MshC subfamily. As to quaternary structure, monomer. Requires Zn(2+) as cofactor.

The enzyme catalyses 1D-myo-inositol 2-amino-2-deoxy-alpha-D-glucopyranoside + L-cysteine + ATP = 1D-myo-inositol 2-(L-cysteinylamino)-2-deoxy-alpha-D-glucopyranoside + AMP + diphosphate + H(+). Catalyzes the ATP-dependent condensation of GlcN-Ins and L-cysteine to form L-Cys-GlcN-Ins. This Corynebacterium urealyticum (strain ATCC 43042 / DSM 7109) protein is L-cysteine:1D-myo-inositol 2-amino-2-deoxy-alpha-D-glucopyranoside ligase 1.